We begin with the raw amino-acid sequence, 299 residues long: ATP phosphoribosyltransferase (299 aa).

This sequence belongs to the ATP phosphoribosyltransferase family. Long subfamily. In terms of assembly, equilibrium between an active dimeric form, an inactive hexameric form and higher aggregates. Interconversion between the various forms is largely reversible and is influenced by the natural substrates and inhibitors of the enzyme. The cofactor is Mg(2+).

The protein localises to the cytoplasm. The catalysed reaction is 1-(5-phospho-beta-D-ribosyl)-ATP + diphosphate = 5-phospho-alpha-D-ribose 1-diphosphate + ATP. The protein operates within amino-acid biosynthesis; L-histidine biosynthesis; L-histidine from 5-phospho-alpha-D-ribose 1-diphosphate: step 1/9. With respect to regulation, feedback inhibited by histidine. Its function is as follows. Catalyzes the condensation of ATP and 5-phosphoribose 1-diphosphate to form N'-(5'-phosphoribosyl)-ATP (PR-ATP). Has a crucial role in the pathway because the rate of histidine biosynthesis seems to be controlled primarily by regulation of HisG enzymatic activity. This Escherichia coli O8 (strain IAI1) protein is ATP phosphoribosyltransferase.